An 85-amino-acid polypeptide reads, in one-letter code: Anti-neuroexcitation peptide 2 (85 aa).

The N-terminal stretch at 1–21 (MKLSLLLVISASMLIDGLVNA) is a signal peptide. The region spanning 22–82 (DGYIRGSNGC…TWKSESNTCG (61 aa)) is the LCN-type CS-alpha/beta domain. 4 disulfides stabilise this stretch: cysteine 31–cysteine 81, cysteine 35–cysteine 56, cysteine 42–cysteine 63, and cysteine 46–cysteine 65.

The protein belongs to the long (4 C-C) scorpion toxin superfamily. Sodium channel inhibitor family. Beta subfamily. As to expression, expressed by the venom gland.

It is found in the secreted. Binds to sodium channels (Nav) and inhibits them. Recombinant ANEP delays the convulsion seizure of insect models by 18% and shows anti-neuroexcitatory activity. The sequence is that of Anti-neuroexcitation peptide 2 from Olivierus martensii (Manchurian scorpion).